The chain runs to 258 residues: Acidic leucine-rich nuclear phosphoprotein 32 family member E (258 aa).

N-acetylmethionine is present on Met1. 4 LRR repeats span residues 18–38, 43–64, 65–87, and 89–110; these read EVTE…EGLN, ELEF…PSLN, KLRK…AEKC, and NLTY…EALQ. Residue Lys68 forms a Glycyl lysine isopeptide (Lys-Gly) (interchain with G-Cter in SUMO2) linkage. Residues 123 to 161 form the LRRCT domain; sequence CEITNLEDYRESIFELLQQITYLDGFDQEDNEAPDSEEE. 2 stretches are compositionally biased toward acidic residues: residues 149–206 and 216–238; these read DQED…EEEV and IQDE…EEEE. The tract at residues 149 to 258 is disordered; sequence DQEDNEAPDS…AEDDGEEDDD (110 aa). Residues 205 to 258 are ZID domain; it reads EVGLSYLMKEEIQDEEDDDDYVDEGEEEEEEEEEGPRGEKRKRDAEDDGEEDDD. A compositionally biased stretch (basic and acidic residues) spans 239 to 249; sequence GPRGEKRKRDA.

Belongs to the ANP32 family. In terms of assembly, component of a SWR1-like complex, composed of EP400, KAT5/TIP60, TRRAP, BRD8, RUVBL1, RUVBL2, ING3 and ANP32E; the complex does not contain SRCAP. Interacts with H2A.Z/H2AZ1. Interacts with the importin alpha KPNA1 and KPNA2. Post-translationally, phosphorylated. The phosphorylation is nuclear localization signal (NLS)-dependent.

Its subcellular location is the cytoplasm. It localises to the nucleus. Functionally, histone chaperone that specifically mediates the genome-wide removal of histone H2A.Z/H2AZ1 from the nucleosome: removes H2A.Z/H2AZ1 from its normal sites of deposition, especially from enhancer and insulator regions. Not involved in deposition of H2A.Z/H2AZ1 in the nucleosome. May stabilize the evicted H2A.Z/H2AZ1-H2B dimer, thus shifting the equilibrium towards dissociation and the off-chromatin state. Inhibits activity of protein phosphatase 2A (PP2A). Does not inhibit protein phosphatase 1. May play a role in cerebellar development and synaptogenesis. In Rattus norvegicus (Rat), this protein is Acidic leucine-rich nuclear phosphoprotein 32 family member E (Anp32e).